A 940-amino-acid chain; its full sequence is Isoleucine--tRNA ligase (940 aa).

The 'HIGH' region signature appears at 58–68 (PYANGSIHIGH). Glu564 serves as a coordination point for L-isoleucyl-5'-AMP. The 'KMSKS' region signature appears at 605–609 (KMSKS). Residue Lys608 participates in ATP binding. Residues Cys903, Cys906, Cys923, and Cys926 each coordinate Zn(2+).

It belongs to the class-I aminoacyl-tRNA synthetase family. IleS type 1 subfamily. As to quaternary structure, monomer. Zn(2+) serves as cofactor.

The protein localises to the cytoplasm. It carries out the reaction tRNA(Ile) + L-isoleucine + ATP = L-isoleucyl-tRNA(Ile) + AMP + diphosphate. Catalyzes the attachment of isoleucine to tRNA(Ile). As IleRS can inadvertently accommodate and process structurally similar amino acids such as valine, to avoid such errors it has two additional distinct tRNA(Ile)-dependent editing activities. One activity is designated as 'pretransfer' editing and involves the hydrolysis of activated Val-AMP. The other activity is designated 'posttransfer' editing and involves deacylation of mischarged Val-tRNA(Ile). This is Isoleucine--tRNA ligase from Shewanella amazonensis (strain ATCC BAA-1098 / SB2B).